We begin with the raw amino-acid sequence, 338 residues long: Lipoyl synthase (338 aa).

Positions 1–22 (MTTVQEAVPNLIPTQDVTPRPA) are disordered. 7 residues coordinate [4Fe-4S] cluster: C84, C89, C95, C110, C114, C117, and S324. The Radical SAM core domain maps to 96–313 (FSGGTATFMI…AEEGYKMGFK (218 aa)).

This sequence belongs to the radical SAM superfamily. Lipoyl synthase family. [4Fe-4S] cluster is required as a cofactor.

It is found in the cytoplasm. The catalysed reaction is [[Fe-S] cluster scaffold protein carrying a second [4Fe-4S](2+) cluster] + N(6)-octanoyl-L-lysyl-[protein] + 2 oxidized [2Fe-2S]-[ferredoxin] + 2 S-adenosyl-L-methionine + 4 H(+) = [[Fe-S] cluster scaffold protein] + N(6)-[(R)-dihydrolipoyl]-L-lysyl-[protein] + 4 Fe(3+) + 2 hydrogen sulfide + 2 5'-deoxyadenosine + 2 L-methionine + 2 reduced [2Fe-2S]-[ferredoxin]. It participates in protein modification; protein lipoylation via endogenous pathway; protein N(6)-(lipoyl)lysine from octanoyl-[acyl-carrier-protein]: step 2/2. In terms of biological role, catalyzes the radical-mediated insertion of two sulfur atoms into the C-6 and C-8 positions of the octanoyl moiety bound to the lipoyl domains of lipoate-dependent enzymes, thereby converting the octanoylated domains into lipoylated derivatives. The polypeptide is Lipoyl synthase (Pseudomonas entomophila (strain L48)).